Reading from the N-terminus, the 337-residue chain is UbiA prenyltransferase domain-containing protein 1 (337 aa).

Ala-2 is modified (N-acetylalanine). 8 consecutive transmembrane segments (helical) span residues 82–102 (LLVG…LVNT), 133–153 (FGVF…CLSP), 159–179 (LALI…GIGF), 187–207 (LVIL…VQVG), 208–228 (SLAV…EAVL), 244–266 (IVTL…LLFL), 276–296 (THCS…FSLE), and 314–334 (LNLL…AGSL).

This sequence belongs to the UbiA prenyltransferase family. Interacts with HMGCR and SOAT1.

The protein resides in the endoplasmic reticulum membrane. The protein localises to the golgi apparatus membrane. Its subcellular location is the mitochondrion membrane. It carries out the reaction menadiol + (2E,6E,10E)-geranylgeranyl diphosphate = menaquinol-4 + diphosphate. It catalyses the reaction all-trans-decaprenyl diphosphate + 4-hydroxybenzoate = 4-hydroxy-3-(all-trans-decaprenyl)benzoate + diphosphate. The protein operates within quinol/quinone metabolism; menaquinone biosynthesis. Its pathway is cofactor biosynthesis; ubiquinone biosynthesis. Functionally, prenyltransferase that mediates the formation of menaquinone-4 (MK-4) and coenzyme Q10. MK-4 is a vitamin K2 isoform required for endothelial cell development. Mediates the conversion of phylloquinone (PK) into MK-4, probably by cleaving the side chain of phylloquinone (PK) to release 2-methyl-1,4-naphthoquinone (menadione; K3) and then prenylating it with geranylgeranyl pyrophosphate (GGPP) to form MK-4. Also plays a role in cardiovascular development independently of MK-4 biosynthesis, by acting as a coenzyme Q10 biosynthetic enzyme: coenzyme Q10, also named ubiquinone, plays an important antioxidant role in the cardiovascular system. Mediates biosynthesis of coenzyme Q10 in the Golgi membrane, leading to protect cardiovascular tissues from NOS3/eNOS-dependent oxidative stress. The polypeptide is UbiA prenyltransferase domain-containing protein 1 (UBIAD1) (Ailuropoda melanoleuca (Giant panda)).